Consider the following 416-residue polypeptide: Tyrosine--tRNA ligase (416 aa).

Tyr40 lines the L-tyrosine pocket. Residues 45 to 54 carry the 'HIGH' region motif; it reads ATAASLHVGH. 2 residues coordinate L-tyrosine: Tyr177 and Gln181. The 'KMSKS' region signature appears at 237 to 241; it reads KMGKS. Residue Lys240 coordinates ATP. An S4 RNA-binding domain is found at 351–416; sequence LSVAHFLVAA…RKKHKLVRLS (66 aa).

It belongs to the class-I aminoacyl-tRNA synthetase family. TyrS type 1 subfamily. As to quaternary structure, homodimer.

It localises to the cytoplasm. The enzyme catalyses tRNA(Tyr) + L-tyrosine + ATP = L-tyrosyl-tRNA(Tyr) + AMP + diphosphate + H(+). In terms of biological role, catalyzes the attachment of tyrosine to tRNA(Tyr) in a two-step reaction: tyrosine is first activated by ATP to form Tyr-AMP and then transferred to the acceptor end of tRNA(Tyr). This is Tyrosine--tRNA ligase from Cereibacter sphaeroides (strain ATCC 17029 / ATH 2.4.9) (Rhodobacter sphaeroides).